A 603-amino-acid polypeptide reads, in one-letter code: Probable potassium transport system protein Kup (603 aa).

A run of 12 helical transmembrane segments spans residues 15–35, 43–63, 94–114, 136–156, 163–183, 201–221, 244–264, 284–304, 336–356, 367–387, 391–411, and 415–435; these read GLVF…IFLL, VIGV…VEYA, AAFI…DGVI, IGQG…FSVQ, ITWV…FSGI, AISF…EVIL, AWRL…AFII, IYIP…QAMI, IYIG…IFEF, GLAV…IFYL, MFRS…LLSN, and IPHG…LIII.

This sequence belongs to the HAK/KUP transporter (TC 2.A.72) family.

The protein resides in the cell membrane. The enzyme catalyses K(+)(in) + H(+)(in) = K(+)(out) + H(+)(out). Transport of potassium into the cell. Likely operates as a K(+):H(+) symporter. The protein is Probable potassium transport system protein Kup of Methanosarcina acetivorans (strain ATCC 35395 / DSM 2834 / JCM 12185 / C2A).